The primary structure comprises 269 residues: 4-hydroxy-tetrahydrodipicolinate reductase (269 aa).

NAD(+) contacts are provided by residues 8 to 13 and Glu-34; that span reads GAAGRM. Residue Arg-35 participates in NADP(+) binding. Residues 98-100 and 122-125 contribute to the NAD(+) site; these read GTT and APNY. His-155 acts as the Proton donor/acceptor in catalysis. His-156 contacts (S)-2,3,4,5-tetrahydrodipicolinate. Residue Lys-159 is the Proton donor of the active site. 165 to 166 serves as a coordination point for (S)-2,3,4,5-tetrahydrodipicolinate; the sequence is GT.

It belongs to the DapB family.

Its subcellular location is the cytoplasm. It carries out the reaction (S)-2,3,4,5-tetrahydrodipicolinate + NAD(+) + H2O = (2S,4S)-4-hydroxy-2,3,4,5-tetrahydrodipicolinate + NADH + H(+). It catalyses the reaction (S)-2,3,4,5-tetrahydrodipicolinate + NADP(+) + H2O = (2S,4S)-4-hydroxy-2,3,4,5-tetrahydrodipicolinate + NADPH + H(+). It functions in the pathway amino-acid biosynthesis; L-lysine biosynthesis via DAP pathway; (S)-tetrahydrodipicolinate from L-aspartate: step 4/4. In terms of biological role, catalyzes the conversion of 4-hydroxy-tetrahydrodipicolinate (HTPA) to tetrahydrodipicolinate. This chain is 4-hydroxy-tetrahydrodipicolinate reductase, found in Vibrio atlanticus (strain LGP32) (Vibrio splendidus (strain Mel32)).